Reading from the N-terminus, the 397-residue chain is Putative odorant receptor 83c (397 aa).

At 1–39 (MSTSESPSSRFRELSKYINSLTNLLGVDFLSPKLKFNYR) the chain is on the cytoplasmic side. A helical transmembrane segment spans residues 40–60 (TWTTIFAIANYTGFTVFTILN). The Extracellular segment spans residues 61–70 (NGGDWRVGLK). A helical transmembrane segment spans residues 71-90 (ASLMTGGLFHGLGKFLTCLL). The Cytoplasmic segment spans residues 91–136 (KHQDMRRLVLYSQSIYDEYETRGDSYHRTLNSNIDRLLGIMKIIRN). The helical transmembrane segment at 137–157 (GYVFAFCLMELLPLAMLMYDG) threads the bilayer. Over 158 to 186 (TRVTAMQYLIPGLPLENNYCYVVTYMIQT) the chain is Extracellular. Residues 187–207 (VTMLVQGVGFYSGDLFVFLGL) traverse the membrane as a helical segment. Residues 208 to 282 (TQILTFADML…ALYYELIATQ (75 aa)) lie on the Cytoplasmic side of the membrane. Residues 283-299 (VLSMALAMMLSFCINLS) traverse the membrane as a helical segment. The Extracellular portion of the chain corresponds to 300-305 (SFHMPS). A helical membrane pass occupies residues 306 to 326 (AIFFVVSAYSMSIYCILGTIL). Topologically, residues 327–365 (EFAYDQVYESICNVTWYELSGEQRKLFGFLLRESQYPHN) are cytoplasmic. Residues 366–386 (IQILGVMSLSVRTALQIVKLI) form a helical membrane-spanning segment. Topologically, residues 387–397 (YSVSMMMMNRA) are extracellular.

Belongs to the insect chemoreceptor superfamily. Heteromeric odorant receptor channel (TC 1.A.69) family. Or67d subfamily. In terms of assembly, interacts with Orco. Complexes exist early in the endomembrane system in olfactory sensory neurons (OSNs), coupling these complexes to the conserved ciliary trafficking pathway. Expressed in olfactory sensory neurons in the antenna.

It is found in the cell membrane. Odorant receptor which mediates acceptance or avoidance behavior, depending on its substrates. The odorant receptor repertoire encodes a large collection of odor stimuli that vary widely in identity, intensity, and duration. May form a complex with Orco to form odorant-sensing units, providing sensitive and prolonged odorant signaling and calcium permeability. The chain is Putative odorant receptor 83c (Or83c) from Drosophila melanogaster (Fruit fly).